The sequence spans 395 residues: MPESTNTIINSSVKKIKLSALCELCHGRKAVMKRPKNLMKLCKECFYNIFETEIHNTIISNDLFYRGEKIAIGASGGKDSTVLASILKTLNERYDYGLNLVLLSIDEGIKGYRDDSLATVKRNQKQYDMPLEIVSYKDLYNWSMDEIVACAGIRSSCTYCGVLRRQALDRGAEKLGIKHVVTGHNADDVAETVLMNLLRGDVARLESSTNIMTTSAGSPIKRSKPFKYTYQKEIVLYAHYKKLDYFSTECTYAPEAFRGTARELLKSLESIRPSCIMDIIYSGEHLVLAPKKQKRKTVAYKNKNKNKKKSNSEQEEQEKQEQEVNPDGSISLNRNGIKKDGNTCEKCGYLSSNKICKACMLLNGLEINRAKVTIDNNSAIDGAAKLTKKLEQLSF.

Residues 297–309 show a composition bias toward basic residues; sequence TVAYKNKNKNKKK. Residues 297 to 335 form a disordered region; the sequence is TVAYKNKNKNKKKSNSEQEEQEKQEQEVNPDGSISLNRN.

Belongs to the TtcA family. CTU1/NCS6/ATPBD3 subfamily.

The protein resides in the cytoplasm. The protein operates within tRNA modification; 5-methoxycarbonylmethyl-2-thiouridine-tRNA biosynthesis. Plays a central role in 2-thiolation of mcm(5)S(2)U at tRNA wobble positions of tRNA(Lys), tRNA(Glu) and tRNA(Gln). Directly binds tRNAs and probably acts by catalyzing adenylation of tRNAs, an intermediate required for 2-thiolation. It is unclear whether it acts as a sulfurtransferase that transfers sulfur from thiocarboxylated URM1 onto the uridine of tRNAs at wobble position. Prior mcm(5) tRNA modification by the elongator complex is required for 2-thiolation. May also be involved in protein urmylation. This is Cytoplasmic tRNA 2-thiolation protein 1 from Candida albicans (strain SC5314 / ATCC MYA-2876) (Yeast).